Reading from the N-terminus, the 458-residue chain is tRNA modification GTPase MnmE (458 aa).

3 residues coordinate (6S)-5-formyl-5,6,7,8-tetrahydrofolate: arginine 32, glutamate 89, and lysine 128. Positions 224–381 (GVRVVLAGRP…LCQRLKECAG (158 aa)) constitute a TrmE-type G domain. A K(+)-binding site is contributed by asparagine 234. GTP is bound by residues 234–239 (NVGKSS), 253–259 (TDVPGTT), and 278–281 (DTAG). Serine 238 lines the Mg(2+) pocket. K(+) contacts are provided by threonine 253, valine 255, and threonine 258. Residue threonine 259 participates in Mg(2+) binding. Residue lysine 458 participates in (6S)-5-formyl-5,6,7,8-tetrahydrofolate binding.

The protein belongs to the TRAFAC class TrmE-Era-EngA-EngB-Septin-like GTPase superfamily. TrmE GTPase family. As to quaternary structure, homodimer. Heterotetramer of two MnmE and two MnmG subunits. K(+) is required as a cofactor.

It is found in the cytoplasm. Exhibits a very high intrinsic GTPase hydrolysis rate. Involved in the addition of a carboxymethylaminomethyl (cmnm) group at the wobble position (U34) of certain tRNAs, forming tRNA-cmnm(5)s(2)U34. The polypeptide is tRNA modification GTPase MnmE (Nitrosococcus oceani (strain ATCC 19707 / BCRC 17464 / JCM 30415 / NCIMB 11848 / C-107)).